We begin with the raw amino-acid sequence, 234 residues long: uncharacterized protein (234 aa).

4 helical membrane-spanning segments follow: residues Thr22 to Ile42, Ile59 to Ile79, Phe154 to Cys174, and Leu186 to Leu206.

It localises to the cell membrane. This is an uncharacterized protein from Escherichia coli (strain K12).